Consider the following 447-residue polypeptide: Delta(5) fatty acid desaturase fat-4 (447 aa).

Residues 1–80 (MVLREQEHEP…TQEPEIPDIK (80 aa)) enclose the Cytochrome b5 heme-binding domain. A run of 4 helical transmembrane segments spans residues 137–157 (IFTILFAFYLQYHTYYLPSAI), 257–277 (WTFMLPFLRLSWLLQSIIFVS), 292–312 (IYEQVGLSLHWAWSLGQLYFL), and 319–339 (IMFFLVSHLVGGFLLSHVVTF).

This sequence belongs to the fatty acid desaturase type 1 family.

It localises to the membrane. It carries out the reaction (11Z,14Z)-eicosadienoyl-CoA + 2 Fe(II)-[cytochrome b5] + O2 + 2 H(+) = (5Z,11Z,14Z)-eicosatrienoyl-CoA + 2 Fe(III)-[cytochrome b5] + 2 H2O. The enzyme catalyses (11Z,14Z,17Z)-eicosatrienoyl-CoA + 2 Fe(II)-[cytochrome b5] + O2 + 2 H(+) = (5Z,11Z,14Z,17Z)-eicosatetraenoyl-CoA + 2 Fe(III)-[cytochrome b5] + 2 H2O. The catalysed reaction is (8Z,11Z,14Z,17Z)-eicosatetraenoyl-CoA + 2 Fe(II)-[cytochrome b5] + O2 + 2 H(+) = (5Z,8Z,11Z,14Z,17Z)-eicosapentaenoyl-CoA + 2 Fe(III)-[cytochrome b5] + 2 H2O. It catalyses the reaction (8Z,11Z,14Z)-eicosatrienoyl-CoA + 2 Fe(II)-[cytochrome b5] + O2 + 2 H(+) = (5Z,8Z,11Z,14Z)-eicosatetraenoyl-CoA + 2 Fe(III)-[cytochrome b5] + 2 H2O. It functions in the pathway lipid metabolism; polyunsaturated fatty acid biosynthesis. Can function as a Delta(5) fatty acid desaturase and behaves as a (8-3) desaturase. Introduces a double bond in the fatty acid chain 5 carbons away from carboxy terminal to biosynthesize polyunsaturated fatty acids (PUFAs) endogenously (PUFAs are essential for membrane structure and many cellular and physiological processes). Acts on a variety of substrates such as dihomo-gamma-linoleoyl-CoA ((8Z,11Z,14Z)-eicosatrienoyl-CoA, 20:3n-6) to generate arachidonoyl-CoA ((5Z,8Z,11Z,14Z)-eicosatetraenoyl-CoA, 20:4n-6). Also acts on a number of other substrates, including fatty acids that do not contain a double bond at the 8 position like (11Z,14Z,17Z)-eicosatrienoyl-CoA (20:3n-3) to produce (5Z,11Z,14Z,17Z)-eicosatetraenoyl-CoA (20:4n-3). Unlike plants, Caenorhabditis elegans desaturases seem to use fatty acyl-CoAs as substrates. The protein is Delta(5) fatty acid desaturase fat-4 (fat-4) of Caenorhabditis elegans.